Reading from the N-terminus, the 88-residue chain is Acyl-CoA-binding domain-containing protein 7 (88 aa).

Residues 3–88 enclose the ACB domain; sequence LQADFDKAAK…AKELIEKYGI (86 aa). An acyl-CoA-binding positions include Arg-15, 30–34, Lys-56, and Tyr-75; that span reads YGLYK.

This sequence belongs to the ACBD7 family.

Binds medium- and long-chain acyl-CoA esters. The sequence is that of Acyl-CoA-binding domain-containing protein 7 (ACBD7) from Bos taurus (Bovine).